Reading from the N-terminus, the 150-residue chain is Aspartate carbamoyltransferase regulatory chain (150 aa).

Positions 105, 110, 133, and 136 each coordinate Zn(2+).

The protein belongs to the PyrI family. As to quaternary structure, contains catalytic and regulatory chains. Requires Zn(2+) as cofactor.

Functionally, involved in allosteric regulation of aspartate carbamoyltransferase. The polypeptide is Aspartate carbamoyltransferase regulatory chain (Thermococcus sibiricus (strain DSM 12597 / MM 739)).